A 592-amino-acid polypeptide reads, in one-letter code: Bifunctional enzyme BirA/CoaX (592 aa).

The segment at 1 to 329 is biotin--protein ligase; the sequence is MTVLKPSHWR…ISLRPDNRSV (329 aa). The BPL/LPL catalytic domain maps to 83–259; it reads QTALKHECAS…ELGAVLEQYA (177 aa). The tract at residues 336-592 is type III pantothenate kinase; it reads DSERFLLLEG…AAEGGESEHA (257 aa). An ATP-binding site is contributed by 344 to 351; the sequence is EGGNSRLK. Substrate is bound by residues Y426 and 433 to 436; that span reads GSDR. The active-site Proton acceptor is D435. T458 is a binding site for ATP. T508 serves as a coordination point for substrate.

It in the N-terminal section; belongs to the biotin--protein ligase family. This sequence in the C-terminal section; belongs to the type III pantothenate kinase family. NH4(+) serves as cofactor. K(+) is required as a cofactor.

It localises to the cytoplasm. It catalyses the reaction biotin + L-lysyl-[protein] + ATP = N(6)-biotinyl-L-lysyl-[protein] + AMP + diphosphate + H(+). The enzyme catalyses (R)-pantothenate + ATP = (R)-4'-phosphopantothenate + ADP + H(+). Its pathway is cofactor biosynthesis; coenzyme A biosynthesis; CoA from (R)-pantothenate: step 1/5. In terms of biological role, activates biotin to form biotinyl-5'-adenylate and transfers the biotin moiety to biotin-accepting proteins. Its function is as follows. Catalyzes the phosphorylation of pantothenate (Pan), the first step in CoA biosynthesis. This is Bifunctional enzyme BirA/CoaX (birA/coaX) from Neisseria gonorrhoeae (strain ATCC 700825 / FA 1090).